Reading from the N-terminus, the 155-residue chain is MTNEEPKRTLVISTIENGTVIDHIKAGEALTVLRILGITGSTRECVSVATNVSSKAQEKKDVVKIEKRELKAQEVDRIALVAPNATINIIRNFRVIEKKGVIIPPVLIGVLRCPNPCCITNTNEPVMSRFEMHGKKAVCSYCDAVISSDISSHII.

Zn(2+) contacts are provided by Cys-113, Cys-118, Cys-139, and Cys-142.

Belongs to the PyrI family. Contains catalytic and regulatory chains. Requires Zn(2+) as cofactor.

Functionally, involved in allosteric regulation of aspartate carbamoyltransferase. This chain is Aspartate carbamoyltransferase regulatory chain, found in Methanospirillum hungatei JF-1 (strain ATCC 27890 / DSM 864 / NBRC 100397 / JF-1).